The following is a 490-amino-acid chain: WD repeat-containing protein JIP5 (490 aa).

7 WD repeats span residues 23–64 (KYND…ERMQ), 70–112 (QKKK…GSCR), 118–155 (PIESSVGKHLFTVGKDHVVKKANTETGKVLTKTDISKD), 157–196 (SSKDAVTKLCHSTTHPFLLSGTENGHVLVYDSNDLSNKFK), 242–284 (DQED…LMDQ), 286–327 (SRIK…HRVN), and 340–377 (GTADEVGFLDIDYEYRLLTAGMDSMKLWSAEGDDEEEE). Positions 368-490 (SAEGDDEEEE…SHGIRRFDGL (123 aa)) are disordered. Composition is skewed to acidic residues over residues 370-406 (EGDDEEEEESEGEESEESEESDEESDESSGEESEGDD) and 413-437 (EESDSNDEDEVESSDDEKEKEEEST). The segment covering 438–448 (ETDHKNIEAES) has biased composition (basic and acidic residues). The span at 450–461 (KQANKRQASQPK) shows a compositional bias: polar residues. The span at 469–484 (KQKLKQTSKLAHSHGI) shows a compositional bias: basic residues.

The protein belongs to the WD repeat WDR55 family.

It localises to the nucleus. The protein localises to the nucleolus. In Meyerozyma guilliermondii (strain ATCC 6260 / CBS 566 / DSM 6381 / JCM 1539 / NBRC 10279 / NRRL Y-324) (Yeast), this protein is WD repeat-containing protein JIP5 (JIP5).